A 333-amino-acid chain; its full sequence is L-lactate dehydrogenase B chain (333 aa).

Residues 29-57 (GQVG…IEDK) and Arg99 each bind NAD(+). Arg106, Asn138, and Arg169 together coordinate substrate. Asn138 serves as a coordination point for NAD(+). The active-site Proton acceptor is His193. Thr248 is a substrate binding site.

The protein belongs to the LDH/MDH superfamily. LDH family. In terms of assembly, homotetramer.

The protein localises to the cytoplasm. It carries out the reaction (S)-lactate + NAD(+) = pyruvate + NADH + H(+). It participates in fermentation; pyruvate fermentation to lactate; (S)-lactate from pyruvate: step 1/1. Interconverts simultaneously and stereospecifically pyruvate and lactate with concomitant interconversion of NADH and NAD(+). The protein is L-lactate dehydrogenase B chain (ldhb) of Anguilla rostrata (American eel).